Here is a 308-residue protein sequence, read N- to C-terminus: Alternaria stem canker resistance protein 1 (308 aa).

The next 6 membrane-spanning stretches (helical) occupy residues Tyr21–Leu41, Phe82–Phe102, Leu128–Glu148, Val165–Ala185, Phe213–Ile233, and Ile254–Trp274. The 215-residue stretch at Asn73–Leu287 folds into the TLC domain.

The protein resides in the endoplasmic reticulum membrane. In terms of biological role, mediates resistance to sphinganine-analog mycotoxins (SAMs) by restoring the sphingolipid biosynthesis. Could salvage the transport of GPI-anchored proteins from the endoplasmic reticulum to the Golgi apparatus in ceramides-depleted cells after SAM exposure. The chain is Alternaria stem canker resistance protein 1 from Solanum lycopersicum (Tomato).